Reading from the N-terminus, the 249-residue chain is Triosephosphate isomerase (249 aa).

8–10 (NWK) lines the substrate pocket. Histidine 95 functions as the Electrophile in the catalytic mechanism. Catalysis depends on glutamate 166, which acts as the Proton acceptor. Substrate contacts are provided by residues glycine 172, serine 211, and 232-233 (GG).

Belongs to the triosephosphate isomerase family. In terms of assembly, homodimer.

The protein localises to the cytoplasm. It carries out the reaction D-glyceraldehyde 3-phosphate = dihydroxyacetone phosphate. Its pathway is carbohydrate biosynthesis; gluconeogenesis. It functions in the pathway carbohydrate degradation; glycolysis; D-glyceraldehyde 3-phosphate from glycerone phosphate: step 1/1. Its function is as follows. Involved in the gluconeogenesis. Catalyzes stereospecifically the conversion of dihydroxyacetone phosphate (DHAP) to D-glyceraldehyde-3-phosphate (G3P). The chain is Triosephosphate isomerase from Granulibacter bethesdensis (strain ATCC BAA-1260 / CGDNIH1).